The chain runs to 427 residues: UDP-N-acetylglucosamine 1-carboxyvinyltransferase 1 (427 aa).

Position 23-24 (23-24) interacts with phosphoenolpyruvate; it reads KN. Arg96 provides a ligand contact to UDP-N-acetyl-alpha-D-glucosamine. Cys120 (proton donor) is an active-site residue. Cys120 is subject to 2-(S-cysteinyl)pyruvic acid O-phosphothioketal. UDP-N-acetyl-alpha-D-glucosamine contacts are provided by residues 125-129, Asp309, and Val331; that span reads RPIDL.

It belongs to the EPSP synthase family. MurA subfamily.

The protein localises to the cytoplasm. The catalysed reaction is phosphoenolpyruvate + UDP-N-acetyl-alpha-D-glucosamine = UDP-N-acetyl-3-O-(1-carboxyvinyl)-alpha-D-glucosamine + phosphate. It functions in the pathway cell wall biogenesis; peptidoglycan biosynthesis. Its function is as follows. Cell wall formation. Adds enolpyruvyl to UDP-N-acetylglucosamine. This is UDP-N-acetylglucosamine 1-carboxyvinyltransferase 1 from Streptococcus pneumoniae (strain ATCC BAA-255 / R6).